Here is a 179-residue protein sequence, read N- to C-terminus: MAELSTVARPYAEALFGAACDDKAGLVSWADLVGELAQVAANADVREAMTDPRLNDAQRAQVFTSLIKSPLPQAARNFIDLLVQNDRLLLLPIIATQFVDLKNRYEGTAQAEITSAFELSDAQVKELIAALEVKFGLKLKPQVTIDPSLIGGVRVAVGDQVLDTSVKAQLARLRDTLAA.

The protein belongs to the ATPase delta chain family. In terms of assembly, F-type ATPases have 2 components, F(1) - the catalytic core - and F(0) - the membrane proton channel. F(1) has five subunits: alpha(3), beta(3), gamma(1), delta(1), epsilon(1). F(0) has three main subunits: a(1), b(2) and c(10-14). The alpha and beta chains form an alternating ring which encloses part of the gamma chain. F(1) is attached to F(0) by a central stalk formed by the gamma and epsilon chains, while a peripheral stalk is formed by the delta and b chains.

It is found in the cell inner membrane. Functionally, f(1)F(0) ATP synthase produces ATP from ADP in the presence of a proton or sodium gradient. F-type ATPases consist of two structural domains, F(1) containing the extramembraneous catalytic core and F(0) containing the membrane proton channel, linked together by a central stalk and a peripheral stalk. During catalysis, ATP synthesis in the catalytic domain of F(1) is coupled via a rotary mechanism of the central stalk subunits to proton translocation. This protein is part of the stalk that links CF(0) to CF(1). It either transmits conformational changes from CF(0) to CF(1) or is implicated in proton conduction. This chain is ATP synthase subunit delta, found in Bordetella avium (strain 197N).